We begin with the raw amino-acid sequence, 215 residues long: UPF0502 protein YceH (215 aa).

It belongs to the UPF0502 family.

The protein is UPF0502 protein YceH of Salmonella paratyphi C (strain RKS4594).